A 319-amino-acid chain; its full sequence is ATP-dependent 6-phosphofructokinase (319 aa).

Residue Gly11 coordinates ATP. 21 to 25 is a binding site for ADP; sequence RAVVR. Residues 72-73 and 102-105 contribute to the ATP site; these read RY and GDGS. Asp103 is a Mg(2+) binding site. 125-127 provides a ligand contact to substrate; it reads TID. Asp127 acts as the Proton acceptor in catalysis. Residue Arg154 participates in ADP binding. Substrate-binding positions include Arg162 and 169 to 171; that span reads MGR. Residues 185-187, Arg211, and 213-215 contribute to the ADP site; these read GAE and KKH. Substrate-binding positions include Glu222, Arg243, and 249 to 252; that span reads HVQR.

The protein belongs to the phosphofructokinase type A (PFKA) family. ATP-dependent PFK group I subfamily. Prokaryotic clade 'B1' sub-subfamily. Homotetramer. Mg(2+) serves as cofactor.

The protein localises to the cytoplasm. The catalysed reaction is beta-D-fructose 6-phosphate + ATP = beta-D-fructose 1,6-bisphosphate + ADP + H(+). The protein operates within carbohydrate degradation; glycolysis; D-glyceraldehyde 3-phosphate and glycerone phosphate from D-glucose: step 3/4. With respect to regulation, allosterically activated by ADP and other diphosphonucleosides, and allosterically inhibited by phosphoenolpyruvate. Catalyzes the phosphorylation of D-fructose 6-phosphate to fructose 1,6-bisphosphate by ATP, the first committing step of glycolysis. The protein is ATP-dependent 6-phosphofructokinase of Listeria monocytogenes serotype 4a (strain HCC23).